Here is a 209-residue protein sequence, read N- to C-terminus: Ribosomal RNA large subunit methyltransferase E (209 aa).

Glycine 63, tryptophan 65, aspartate 83, aspartate 99, and aspartate 124 together coordinate S-adenosyl-L-methionine. The active-site Proton acceptor is the lysine 164.

It belongs to the class I-like SAM-binding methyltransferase superfamily. RNA methyltransferase RlmE family.

The protein resides in the cytoplasm. It carries out the reaction uridine(2552) in 23S rRNA + S-adenosyl-L-methionine = 2'-O-methyluridine(2552) in 23S rRNA + S-adenosyl-L-homocysteine + H(+). Its function is as follows. Specifically methylates the uridine in position 2552 of 23S rRNA at the 2'-O position of the ribose in the fully assembled 50S ribosomal subunit. In Photobacterium profundum (strain SS9), this protein is Ribosomal RNA large subunit methyltransferase E.